The chain runs to 231 residues: NADH-ubiquinone oxidoreductase chain 4 (231 aa).

6 helical membrane passes run 1 to 21, 34 to 54, 63 to 85, 89 to 111, 128 to 148, and 169 to 189; these read PIAG…YGII, MFLP…LTCL, IAYS…TPWG, ALAL…NTTY, ILPM…AIPP, and TIIM…HMFL.

The protein belongs to the complex I subunit 4 family.

The protein localises to the mitochondrion membrane. It carries out the reaction a ubiquinone + NADH + 5 H(+)(in) = a ubiquinol + NAD(+) + 4 H(+)(out). Its function is as follows. Core subunit of the mitochondrial membrane respiratory chain NADH dehydrogenase (Complex I) that is believed to belong to the minimal assembly required for catalysis. Complex I functions in the transfer of electrons from NADH to the respiratory chain. The immediate electron acceptor for the enzyme is believed to be ubiquinone. The chain is NADH-ubiquinone oxidoreductase chain 4 (MT-ND4) from Bothrocophias hyoprora (Amazonian hognose viper).